The sequence spans 482 residues: Succinate-semialdehyde dehydrogenase [NADP(+)] GabD (482 aa).

NADP(+) is bound by residues Trp156–Asn157, Lys180–Ser183, and Gly233–Ser234. The active-site Proton acceptor is Glu255. Leu256 contributes to the NADP(+) binding site. The Nucleophile role is filled by Cys289. An NADP(+)-binding site is contributed by Glu386.

Belongs to the aldehyde dehydrogenase family. In terms of assembly, homotetramer.

The enzyme catalyses succinate semialdehyde + NADP(+) + H2O = succinate + NADPH + 2 H(+). It carries out the reaction 5-oxopentanoate + NADP(+) + H2O = glutarate + NADPH + 2 H(+). Its pathway is amino-acid degradation; 4-aminobutanoate degradation. It participates in amino-acid degradation. Catalyzes the NADP(+)-dependent oxidation of succinate semialdehyde to succinate. Thereby functions in a GABA degradation pathway that allows some E.coli strains to utilize GABA as a nitrogen source for growth. Also catalyzes the conversion of glutarate semialdehyde to glutarate, as part of a L-lysine degradation pathway that proceeds via cadaverine, glutarate and L-2-hydroxyglutarate. The protein is Succinate-semialdehyde dehydrogenase [NADP(+)] GabD (gabD) of Escherichia coli (strain K12).